The chain runs to 405 residues: SPbeta prophage-derived uncharacterized protein YomR (405 aa).

Residues 9 to 36 are a coiled coil; the sequence is QLKQNNIQINSLRGSNDRAEKHMLEHEQ.

The sequence is that of SPbeta prophage-derived uncharacterized protein YomR (yomR) from Bacillus subtilis (strain 168).